The primary structure comprises 140 residues: Putative nickel-responsive regulator 3 (140 aa).

Ni(2+)-binding residues include His81, His92, His94, and Cys100.

Belongs to the transcriptional regulatory CopG/NikR family. It depends on Ni(2+) as a cofactor.

In terms of biological role, transcriptional regulator. The chain is Putative nickel-responsive regulator 3 from Methanosarcina mazei (strain ATCC BAA-159 / DSM 3647 / Goe1 / Go1 / JCM 11833 / OCM 88) (Methanosarcina frisia).